We begin with the raw amino-acid sequence, 278 residues long: D-aminoacyl-tRNA deacylase (278 aa).

It belongs to the DtdA deacylase family. As to quaternary structure, monomer. Requires Zn(2+) as cofactor.

It catalyses the reaction a D-aminoacyl-tRNA + H2O = a tRNA + a D-alpha-amino acid + H(+). The catalysed reaction is glycyl-tRNA(Ala) + H2O = tRNA(Ala) + glycine + H(+). In terms of biological role, D-aminoacyl-tRNA deacylase with broad substrate specificity. By recycling D-aminoacyl-tRNA to D-amino acids and free tRNA molecules, this enzyme counteracts the toxicity associated with the formation of D-aminoacyl-tRNA entities in vivo. This Archaeoglobus fulgidus (strain ATCC 49558 / DSM 4304 / JCM 9628 / NBRC 100126 / VC-16) protein is D-aminoacyl-tRNA deacylase.